Consider the following 96-residue polypeptide: MKIAITMAVVMLSVCCSSASSDTCPGFFQVLEFLFMGSESSYEAALKFYNPGSDLQDSGTQLKKLVDTLPQKTRMNIMKLSEIILTSPLCNQDLSV.

Positions 1–21 are cleaved as a signal peptide; that stretch reads MKIAITMAVVMLSVCCSSASS.

This sequence belongs to the secretoglobin family. Antiparallel homodimer; disulfide-linked. Interaction with LMBR1L is controversial.

Its subcellular location is the secreted. Binds phosphatidylcholine, phosphatidylinositol, polychlorinated biphenyls (PCB) and weakly progesterone, potent inhibitor of phospholipase A2. In Mesocricetus auratus (Golden hamster), this protein is Uteroglobin (SCGB1A1).